The sequence spans 275 residues: 2,3,4,5-tetrahydropyridine-2,6-dicarboxylate N-succinyltransferase (275 aa).

Residues arginine 108 and aspartate 145 each contribute to the substrate site.

It belongs to the transferase hexapeptide repeat family. As to quaternary structure, homotrimer.

The protein localises to the cytoplasm. It carries out the reaction (S)-2,3,4,5-tetrahydrodipicolinate + succinyl-CoA + H2O = (S)-2-succinylamino-6-oxoheptanedioate + CoA. It functions in the pathway amino-acid biosynthesis; L-lysine biosynthesis via DAP pathway; LL-2,6-diaminopimelate from (S)-tetrahydrodipicolinate (succinylase route): step 1/3. This Roseobacter denitrificans (strain ATCC 33942 / OCh 114) (Erythrobacter sp. (strain OCh 114)) protein is 2,3,4,5-tetrahydropyridine-2,6-dicarboxylate N-succinyltransferase.